Consider the following 231-residue polypeptide: Large ribosomal subunit protein uL1 (231 aa).

The protein belongs to the universal ribosomal protein uL1 family. Part of the 50S ribosomal subunit.

In terms of biological role, binds directly to 23S rRNA. The L1 stalk is quite mobile in the ribosome, and is involved in E site tRNA release. Protein L1 is also a translational repressor protein, it controls the translation of the L11 operon by binding to its mRNA. In Chromobacterium violaceum (strain ATCC 12472 / DSM 30191 / JCM 1249 / CCUG 213 / NBRC 12614 / NCIMB 9131 / NCTC 9757 / MK), this protein is Large ribosomal subunit protein uL1.